Here is a 127-residue protein sequence, read N- to C-terminus: Small ribosomal subunit protein uS11 (127 aa).

Belongs to the universal ribosomal protein uS11 family. Part of the 30S ribosomal subunit. Interacts with proteins S7 and S18. Binds to IF-3.

Located on the platform of the 30S subunit, it bridges several disparate RNA helices of the 16S rRNA. Forms part of the Shine-Dalgarno cleft in the 70S ribosome. The sequence is that of Small ribosomal subunit protein uS11 from Streptococcus suis (strain 98HAH33).